We begin with the raw amino-acid sequence, 518 residues long: Chromosomal replication initiator protein DnaA (518 aa).

The tract at residues Met-1 to Ser-72 is domain I, interacts with DnaA modulators. The interval Ser-72–Thr-180 is domain II. Residues Asn-181–Ser-397 are domain III, AAA+ region. ATP contacts are provided by Gly-225, Gly-227, Lys-228, and Thr-229. Positions Arg-398–Asn-518 are domain IV, binds dsDNA.

Belongs to the DnaA family. As to quaternary structure, oligomerizes as a right-handed, spiral filament on DNA at oriC.

The protein resides in the cytoplasm. In terms of biological role, plays an essential role in the initiation and regulation of chromosomal replication. ATP-DnaA binds to the origin of replication (oriC) to initiate formation of the DNA replication initiation complex once per cell cycle. Binds the DnaA box (a 9 base pair repeat at the origin) and separates the double-stranded (ds)DNA. Forms a right-handed helical filament on oriC DNA; dsDNA binds to the exterior of the filament while single-stranded (ss)DNA is stabiized in the filament's interior. The ATP-DnaA-oriC complex binds and stabilizes one strand of the AT-rich DNA unwinding element (DUE), permitting loading of DNA polymerase. After initiation quickly degrades to an ADP-DnaA complex that is not apt for DNA replication. Binds acidic phospholipids. The polypeptide is Chromosomal replication initiator protein DnaA (Neisseria meningitidis serogroup C / serotype 2a (strain ATCC 700532 / DSM 15464 / FAM18)).